Reading from the N-terminus, the 398-residue chain is Leucine aminopeptidase 1 (398 aa).

Residues 1–20 (MKFLQTSLIAAALPAALVSG) form the signal peptide. Positions 21 to 87 (RFVIENEGDN…LRAWTQSQAS (67 aa)) are excised as a propeptide. An N-linked (GlcNAc...) asparagine glycan is attached at Asn179. Positions 187, 206, 245, and 272 each coordinate Zn(2+). A disulfide bridge links Cys321 with Cys325. Residue His354 participates in Zn(2+) binding.

It belongs to the peptidase M28 family. M28E subfamily. In terms of assembly, monomer. The cofactor is Zn(2+).

Its subcellular location is the secreted. In terms of biological role, extracellular aminopeptidase that allows assimilation of proteinaceous substrates. This Trichoderma harzianum (Hypocrea lixii) protein is Leucine aminopeptidase 1 (lap1).